A 148-amino-acid polypeptide reads, in one-letter code: Large ribosomal subunit protein bL28c (148 aa).

The transit peptide at 1–71 directs the protein to the chloroplast; it reads MAASGMLISN…PLKPSLQPVA (71 aa).

Component of the chloroplast large ribosomal subunit (LSU). Mature 70S chloroplast ribosomes of higher plants consist of a small (30S) and a large (50S) subunit. The 30S small subunit contains 1 molecule of ribosomal RNA (16S rRNA) and 24 different proteins. The 50S large subunit contains 3 rRNA molecules (23S, 5S and 4.5S rRNA) and 33 different proteins.

It is found in the plastid. It localises to the chloroplast. Its function is as follows. Component of the chloroplast ribosome (chloro-ribosome), a dedicated translation machinery responsible for the synthesis of chloroplast genome-encoded proteins, including proteins of the transcription and translation machinery and components of the photosynthetic apparatus. The polypeptide is Large ribosomal subunit protein bL28c (RPL28) (Spinacia oleracea (Spinach)).